Reading from the N-terminus, the 167-residue chain is Gametocyte-specific factor 1 homolog (167 aa).

2 consecutive CHHC U11-48K-type zinc fingers follow at residues 1–28 (MVYC…RVIY) and 34–61 (LMVC…EDRN). Positions 4, 10, 20, 24, 37, 43, 53, and 57 each coordinate Zn(2+). The span at 128–161 (EKRRHFGEDYEEEKKPRKAKARADLRPTPYEHRR) shows a compositional bias: basic and acidic residues. The tract at residues 128-167 (EKRRHFGEDYEEEKKPRKAKARADLRPTPYEHRRPYSRRQ) is disordered.

This sequence belongs to the UPF0224 (FAM112) family. As to quaternary structure, interacts with piwi.

The protein resides in the nucleus. Its function is as follows. Acts via the piwi-interacting RNA (piRNA) pathway which mediates the repression of transposable elements during meiosis by forming complexes composed of piRNAs and piwi proteins and governs the methylation and subsequent repression of transposons. Required for repression of transposons and neighboring genes in ovarian somatic and germline cells. In Drosophila melanogaster (Fruit fly), this protein is Gametocyte-specific factor 1 homolog.